The primary structure comprises 371 residues: Cytochrome b (371 aa).

4 consecutive transmembrane segments (helical) span residues 24-44 (FGSMLLACLTLQITTGFFLAL), 68-89 (WTMQNLHSIGASMFFICIYIHI), 104-124 (WLSGITLLATLMATAFFGYVL), and 169-189 (FFALHFILPFAIVSLTSVHIV). Positions 74 and 88 each coordinate heme b. Residues histidine 173 and histidine 187 each coordinate heme b. An a ubiquinone-binding site is contributed by histidine 192. 4 helical membrane-spanning segments follow: residues 217-237 (YKDTLMLTFMITTLFMIMSFA), 279-299 (LGGTLALVMSIAILMTMPFTH), 311-331 (LSQLMFWTLIATFITITWTAT), and 338-357 (FITIGQLTSILYFSFFMTNP).

This sequence belongs to the cytochrome b family. As to quaternary structure, the cytochrome bc1 complex contains 3 respiratory subunits (MT-CYB, CYC1 and UQCRFS1), 2 core proteins (UQCRC1 and UQCRC2) and probably 6 low-molecular weight proteins. The cofactor is heme b.

It is found in the mitochondrion inner membrane. Its function is as follows. Component of the ubiquinol-cytochrome c reductase complex (complex III or cytochrome b-c1 complex) that is part of the mitochondrial respiratory chain. The b-c1 complex mediates electron transfer from ubiquinol to cytochrome c. Contributes to the generation of a proton gradient across the mitochondrial membrane that is then used for ATP synthesis. This is Cytochrome b (MT-CYB) from Homoroselaps lacteus (Spotted harlequin snake).